The chain runs to 290 residues: Putative speedy protein-like protein 3 (290 aa).

A disordered region spans residues 16-50 (GVDPSPPCRSLGWKRKKEWSDESEEEPEKELAPEP). A compositionally biased stretch (acidic residues) spans 36-50 (DESEEEPEKELAPEP).

It belongs to the Speedy/Ringo family.

This Homo sapiens (Human) protein is Putative speedy protein-like protein 3.